A 190-amino-acid chain; its full sequence is Elongation factor P (190 aa).

The protein belongs to the elongation factor P family.

It localises to the cytoplasm. It participates in protein biosynthesis; polypeptide chain elongation. Its function is as follows. Involved in peptide bond synthesis. Stimulates efficient translation and peptide-bond synthesis on native or reconstituted 70S ribosomes in vitro. Probably functions indirectly by altering the affinity of the ribosome for aminoacyl-tRNA, thus increasing their reactivity as acceptors for peptidyl transferase. In Mycoplasma genitalium (strain ATCC 33530 / DSM 19775 / NCTC 10195 / G37) (Mycoplasmoides genitalium), this protein is Elongation factor P (efp).